A 117-amino-acid polypeptide reads, in one-letter code: Small nuclear ribonucleoprotein Sm D1 (117 aa).

The region spanning 2–74 (KLVRFLMKLT…IRYYILPDSL (73 aa)) is the Sm domain. The segment at 81-117 (IDDSTKPKQKKKEVVRGRGRGRGRGTRGRGRGASRGF) is disordered. The span at 87–117 (PKQKKKEVVRGRGRGRGRGTRGRGRGASRGF) shows a compositional bias: basic residues.

The protein belongs to the snRNP core protein family. Belongs to the 40S cdc5-associated complex (or cwf complex), a spliceosome sub-complex reminiscent of a late-stage spliceosome composed of the U2, U5 and U6 snRNAs and at least brr2, cdc5, cwf2/prp3, cwf3/syf1, cwf4/syf3, cwf5/ecm2, spp42/cwf6, cwf7/spf27, cwf8, cwf9, cwf10, cwf11, cwf12, prp45/cwf13, cwf14, cwf15, cwf16, cwf17, cwf18, cwf19, cwf20, cwf21, cwf22, cwf23, cwf24, cwf25, cwf26, cyp7/cwf27, cwf28, cwf29/ist3, lea1, msl1, prp5/cwf1, prp10, prp12/sap130, prp17, prp22, sap61, sap62, sap114, sap145, slu7, smb1, smd1, smd3, smf1, smg1 and syf2. Interacts with saf5; the interaction is direct.

Its subcellular location is the nucleus. The protein localises to the cytoplasm. Functionally, plays a role in pre-mRNA splicing as a core component of the spliceosomal U1, U2, U4 and U5 small nuclear ribonucleoproteins (snRNPs), the building blocks of the spliceosome. The sequence is that of Small nuclear ribonucleoprotein Sm D1 (smd1) from Schizosaccharomyces pombe (strain 972 / ATCC 24843) (Fission yeast).